Reading from the N-terminus, the 450-residue chain is Flavin-containing monooxygenase FMO GS-OX-like 5 (450 aa).

17–22 (GAGPAG) is a binding site for FAD. Residue 215–220 (GNSSSA) coordinates NADP(+).

The protein belongs to the FMO family. The cofactor is FAD.

In terms of biological role, catalyzes the conversion of methylthioalkyl glucosinolates of any chain length into methylsulfinylalkyl glucosinolates. In Arabidopsis thaliana (Mouse-ear cress), this protein is Flavin-containing monooxygenase FMO GS-OX-like 5.